Here is a 130-residue protein sequence, read N- to C-terminus: Fluoride-specific ion channel FluC (130 aa).

4 consecutive transmembrane segments (helical) span residues 3–23 (FIFLWAALGGAIGSSLRYFVG), 39–59 (GTFSVNVIGCFVIGFMGHLAV), 67–87 (FGIFFVTGVLGGFTTFSSYGL), and 102–122 (VSYALGTNILGLIGVAIGWFL). Na(+) contacts are provided by Gly-77 and Thr-80.

This sequence belongs to the fluoride channel Fluc/FEX (TC 1.A.43) family.

The protein resides in the cell inner membrane. It carries out the reaction fluoride(in) = fluoride(out). Its activity is regulated as follows. Na(+) is not transported, but it plays an essential structural role and its presence is essential for fluoride channel function. Fluoride-specific ion channel. Important for reducing fluoride concentration in the cell, thus reducing its toxicity. This Helicobacter pylori (strain Shi470) protein is Fluoride-specific ion channel FluC.